A 261-amino-acid polypeptide reads, in one-letter code: MKVQIYQLPIVFGDSSKNETQITQWFEKNMNAEVDVVVLPEMWNNGYDLEHLNEKADNNLGQSFSFIKHLAEKYKVDIVAGSVSNIRNNQIFNTAFSVNKSGQLINEYDKVHLVPMLREHEFLTAGEYVAEPFQLSDGTYVTQLICYDLRFPELLRYPARSGAKIAFYVAQWPMSRLQHWHSLLKARAIENNMFVIGTNSTGFDGNTEYAGHSIVINPNGDLVGELNESADILTVDLNLNEVEQQRENIPVFKSIKLDLYK.

The 239-residue stretch at 1–239 (MKVQIYQLPI…ADILTVDLNL (239 aa)) folds into the CN hydrolase domain. Glu-41 (proton acceptor) is an active-site residue. Residue Lys-110 is the Proton donor of the active site. Cys-146 functions as the Nucleophile in the catalytic mechanism.

Belongs to the carbon-nitrogen hydrolase superfamily. NIT1/NIT2 family.

The chain is Hydrolase in agr operon from Staphylococcus aureus.